The following is a 339-amino-acid chain: 4-hydroxy-2-oxovalerate aldolase (339 aa).

In terms of domain architecture, Pyruvate carboxyltransferase spans 7–257 (IRIMDTTLRD…QVGVDLYKIM (251 aa)). 15 to 16 (RD) serves as a coordination point for substrate. A Mn(2+)-binding site is contributed by Asp-16. His-19 acts as the Proton acceptor in catalysis. Ser-169 and His-196 together coordinate substrate. Residues His-196 and His-198 each contribute to the Mn(2+) site. Tyr-286 provides a ligand contact to substrate.

It belongs to the 4-hydroxy-2-oxovalerate aldolase family.

It carries out the reaction (S)-4-hydroxy-2-oxopentanoate = acetaldehyde + pyruvate. The protein is 4-hydroxy-2-oxovalerate aldolase of Pelotomaculum thermopropionicum (strain DSM 13744 / JCM 10971 / SI).